Here is a 193-residue protein sequence, read N- to C-terminus: Peptidyl-tRNA hydrolase (193 aa).

Y17 serves as a coordination point for tRNA. The Proton acceptor role is filled by H22. TRNA is bound by residues Y68, N70, and N116.

Belongs to the PTH family. In terms of assembly, monomer.

The protein resides in the cytoplasm. The enzyme catalyses an N-acyl-L-alpha-aminoacyl-tRNA + H2O = an N-acyl-L-amino acid + a tRNA + H(+). Functionally, hydrolyzes ribosome-free peptidyl-tRNAs (with 1 or more amino acids incorporated), which drop off the ribosome during protein synthesis, or as a result of ribosome stalling. Its function is as follows. Catalyzes the release of premature peptidyl moieties from peptidyl-tRNA molecules trapped in stalled 50S ribosomal subunits, and thus maintains levels of free tRNAs and 50S ribosomes. The sequence is that of Peptidyl-tRNA hydrolase from Chromobacterium violaceum (strain ATCC 12472 / DSM 30191 / JCM 1249 / CCUG 213 / NBRC 12614 / NCIMB 9131 / NCTC 9757 / MK).